Consider the following 330-residue polypeptide: Putative [LysW]-L-2-aminoadipate/[LysW]-L-glutamate phosphate reductase (330 aa).

Residues 10–13 and 34–36 each bind NADP(+); these read SGYI and SRR. Cys142 is an active-site residue. Asn297 is an NADP(+) binding site.

It belongs to the NAGSA dehydrogenase family. Type 1 subfamily. LysY sub-subfamily.

It is found in the cytoplasm. The catalysed reaction is [amino-group carrier protein]-C-terminal-N-(1-carboxy-5-oxopentan-1-yl)-L-glutamine + phosphate + NADP(+) = [amino-group carrier protein]-C-terminal-N-(1-carboxy-5-phosphooxy-5-oxopentan-1-yl)-L-glutamine + NADPH + H(+). It catalyses the reaction [amino-group carrier protein]-C-terminal-gamma-(L-glutamyl-5-semialdehyde)-L-glutamate + phosphate + NADP(+) = [amino-group carrier protein]-C-terminal-gamma-(5-phospho-L-glutamyl)-L-glutamate + NADPH + H(+). Its pathway is amino-acid biosynthesis; L-lysine biosynthesis via AAA pathway; L-lysine from L-alpha-aminoadipate (Thermus route): step 3/5. It functions in the pathway amino-acid biosynthesis; L-arginine biosynthesis. Involved in both the arginine and lysine biosynthetic pathways. This chain is Putative [LysW]-L-2-aminoadipate/[LysW]-L-glutamate phosphate reductase, found in Thermococcus kodakarensis (strain ATCC BAA-918 / JCM 12380 / KOD1) (Pyrococcus kodakaraensis (strain KOD1)).